The following is a 140-amino-acid chain: Lipoprotein MlpD (140 aa).

The first 17 residues, 1–17 (MKIINILFCLFLLMLNG), serve as a signal peptide directing secretion. Residue cysteine 18 is the site of N-palmitoyl cysteine attachment. Cysteine 18 is lipidated: S-diacylglycerol cysteine. The tract at residues 22 to 53 (DTNNSQTKSRQKRDLTQKEATQEKPKSKEELL) is disordered. The segment covering 33-53 (KRDLTQKEATQEKPKSKEELL) has biased composition (basic and acidic residues).

The protein belongs to the Multicopy lipoprotein (Mlp) family.

Its subcellular location is the cell outer membrane. In terms of biological role, an outer membrane protein that may participate in pathogenesis. Some human Lyme disease patients have antibodies against this protein. The Mlp proteins probably undergo intragenic recombination, generating new alleles. The polypeptide is Lipoprotein MlpD (Borreliella burgdorferi (strain ATCC 35210 / DSM 4680 / CIP 102532 / B31) (Borrelia burgdorferi)).